The sequence spans 380 residues: 1-deoxy-D-xylulose 5-phosphate reductoisomerase (380 aa).

NADPH-binding residues include Thr-10, Gly-11, Ser-12, Ile-13, Gly-36, Arg-37, Asn-38, and Asn-120. Lys-121 contributes to the 1-deoxy-D-xylulose 5-phosphate binding site. Glu-122 serves as a coordination point for NADPH. Asp-146 provides a ligand contact to Mn(2+). 1-deoxy-D-xylulose 5-phosphate is bound by residues Ser-147, Glu-148, Ser-172, and His-195. Glu-148 contributes to the Mn(2+) binding site. Gly-201 provides a ligand contact to NADPH. The 1-deoxy-D-xylulose 5-phosphate site is built by Ser-208, Asn-213, Lys-214, and Glu-217. Glu-217 contacts Mn(2+).

The protein belongs to the DXR family. The cofactor is Mg(2+). It depends on Mn(2+) as a cofactor.

It catalyses the reaction 2-C-methyl-D-erythritol 4-phosphate + NADP(+) = 1-deoxy-D-xylulose 5-phosphate + NADPH + H(+). The protein operates within isoprenoid biosynthesis; isopentenyl diphosphate biosynthesis via DXP pathway; isopentenyl diphosphate from 1-deoxy-D-xylulose 5-phosphate: step 1/6. Functionally, catalyzes the NADPH-dependent rearrangement and reduction of 1-deoxy-D-xylulose-5-phosphate (DXP) to 2-C-methyl-D-erythritol 4-phosphate (MEP). The polypeptide is 1-deoxy-D-xylulose 5-phosphate reductoisomerase (Listeria innocua serovar 6a (strain ATCC BAA-680 / CLIP 11262)).